Here is a 92-residue protein sequence, read N- to C-terminus: N(2)-fixation sustaining protein CowN (92 aa).

Belongs to the CowN family.

Is required to sustain N(2)-dependent growth in the presence of low levels of carbon monoxide (CO). Probably acts by protecting the N(2) fixation ability of the nitrogenase complex, which is inactivated in the presence of CO. This chain is N(2)-fixation sustaining protein CowN, found in Rhodopseudomonas palustris (strain ATCC BAA-98 / CGA009).